The sequence spans 292 residues: ATP phosphoribosyltransferase (292 aa).

The protein belongs to the ATP phosphoribosyltransferase family. Long subfamily. Mg(2+) is required as a cofactor.

Its subcellular location is the cytoplasm. The enzyme catalyses 1-(5-phospho-beta-D-ribosyl)-ATP + diphosphate = 5-phospho-alpha-D-ribose 1-diphosphate + ATP. It participates in amino-acid biosynthesis; L-histidine biosynthesis; L-histidine from 5-phospho-alpha-D-ribose 1-diphosphate: step 1/9. Feedback inhibited by histidine. Its function is as follows. Catalyzes the condensation of ATP and 5-phosphoribose 1-diphosphate to form N'-(5'-phosphoribosyl)-ATP (PR-ATP). Has a crucial role in the pathway because the rate of histidine biosynthesis seems to be controlled primarily by regulation of HisG enzymatic activity. The sequence is that of ATP phosphoribosyltransferase from Thermodesulfovibrio yellowstonii (strain ATCC 51303 / DSM 11347 / YP87).